The chain runs to 202 residues: Na(+)-translocating NADH-quinone reductase subunit E (202 aa).

6 consecutive transmembrane segments (helical) span residues 5–25, 35–55, 81–101, 114–134, 144–164, and 180–200; these read VSLFITSVFIENMALAYFLGM, VSTAIGLGVAVIVVMSITVPL, FLGLLSYIALIAATVQILEMF, GVFLPLITVNCAIMGGVLFMV, LTYGVGAGFGWALAIALLAGI, and LGITFITVGLMSLGFMSFGGM.

Belongs to the NqrDE/RnfAE family. As to quaternary structure, composed of six subunits; NqrA, NqrB, NqrC, NqrD, NqrE and NqrF.

It is found in the cell inner membrane. It carries out the reaction a ubiquinone + n Na(+)(in) + NADH + H(+) = a ubiquinol + n Na(+)(out) + NAD(+). NQR complex catalyzes the reduction of ubiquinone-1 to ubiquinol by two successive reactions, coupled with the transport of Na(+) ions from the cytoplasm to the periplasm. NqrA to NqrE are probably involved in the second step, the conversion of ubisemiquinone to ubiquinol. The polypeptide is Na(+)-translocating NADH-quinone reductase subunit E (Psychrobacter sp. (strain PRwf-1)).